A 155-amino-acid chain; its full sequence is RNA pyrophosphohydrolase (155 aa).

The Nudix hydrolase domain occupies 5–147 (KYRPNVAAII…KRQVYRQVIA (143 aa)). Positions 42–63 (GGIDEGETPLEALHRELLEEIG) match the Nudix box motif.

Belongs to the Nudix hydrolase family. RppH subfamily. Requires a divalent metal cation as cofactor.

Its function is as follows. Accelerates the degradation of transcripts by removing pyrophosphate from the 5'-end of triphosphorylated RNA, leading to a more labile monophosphorylated state that can stimulate subsequent ribonuclease cleavage. The polypeptide is RNA pyrophosphohydrolase (Helicobacter pylori (strain G27)).